Consider the following 163-residue polypeptide: Troponin C (163 aa).

At serine 1 the chain carries N-acetylserine. EF-hand domains are found at residues 14–49 (EQIS…LGMS), 50–85 (ISRE…AMQD), 90–125 (IPDD…CAGD), and 127–162 (LTDD…LKVR). The residue at position 20 (lysine 20) is an N6,N6-dimethyllysine; alternate. Lysine 20 is subject to N6-methyllysine; alternate. Ca(2+)-binding residues include aspartate 27, aspartate 29, aspartate 33, glutamate 38, aspartate 63, aspartate 65, serine 67, threonine 69, glutamate 74, aspartate 103, asparagine 105, aspartate 107, and glutamate 114.

The protein belongs to the troponin C family.

In terms of biological role, troponin is the central regulatory protein of striated muscle contraction. Tn consists of three components: Tn-I which is the inhibitor of actomyosin ATPase, Tn-T which contains the binding site for tropomyosin and Tn-C. The binding of calcium to Tn-C abolishes the inhibitory action of Tn on actin filaments. The sequence is that of Troponin C from Branchiostoma lanceolatum (Common lancelet).